Consider the following 352-residue polypeptide: Dof zinc finger protein DOF1.8 (352 aa).

A disordered region spans residues 24 to 46 (LKQQSNPPSPATPVERKARPEKD). Over residues 37–46 (VERKARPEKD) the composition is skewed to basic and acidic residues. The Dof-type zinc-finger motif lies at 49 to 103 (LNCPRCNSLNTKFCYYNNYSLTQPRYFCKDCRRYWTAGGSLRNIPVGGGVRKNKR). Zn(2+) contacts are provided by Cys51, Cys54, Cys76, and Cys79. 2 disordered regions span residues 93–136 (PVGG…PLPH) and 265–334 (GGDP…VGFW). Low complexity predominate over residues 104 to 129 (SSSNSSSSSPSSSSSSKKPLFANNNT). A compositionally biased stretch (basic and acidic residues) spans 310–323 (ENNDEHSDHEHEKE).

The protein localises to the nucleus. Transcription factor that binds specifically to a 5'-AA[AG]G-3' consensus core sequence. The polypeptide is Dof zinc finger protein DOF1.8 (DOF1.8) (Arabidopsis thaliana (Mouse-ear cress)).